A 224-amino-acid chain; its full sequence is UPF0758 protein PSPPH_0210 (224 aa).

Residues alanine 102–methionine 224 enclose the MPN domain. 3 residues coordinate Zn(2+): histidine 173, histidine 175, and aspartate 186. A JAMM motif motif is present at residues histidine 173–aspartate 186.

It belongs to the UPF0758 family.

The polypeptide is UPF0758 protein PSPPH_0210 (Pseudomonas savastanoi pv. phaseolicola (strain 1448A / Race 6) (Pseudomonas syringae pv. phaseolicola (strain 1448A / Race 6))).